The primary structure comprises 411 residues: Translation initiation factor 2 subunit gamma (411 aa).

The tr-type G domain occupies 9-203; the sequence is QAEVNIGMVG…AIEDFIPTPK (195 aa). The G1 stretch occupies residues 18–25; that stretch reads GHVDHGKT. Mg(2+) contacts are provided by D21, T25, G46, and T48. 21 to 26 lines the GTP pocket; the sequence is DHGKTT. The G2 stretch occupies residues 46-50; it reads GITIK. Zn(2+)-binding residues include C61, C64, C73, and C76. The segment at 90-93 is G3; that stretch reads DAPG. Residues 146–149 and 181–183 each bind GTP; these read NKIE and SAL. The interval 146–149 is G4; it reads NKIE. Residues 181–183 form a G5 region; the sequence is SAL.

The protein belongs to the TRAFAC class translation factor GTPase superfamily. Classic translation factor GTPase family. EIF2G subfamily. In terms of assembly, heterotrimer composed of an alpha, a beta and a gamma chain. The cofactor is Mg(2+).

It catalyses the reaction GTP + H2O = GDP + phosphate + H(+). Functionally, eIF-2 functions in the early steps of protein synthesis by forming a ternary complex with GTP and initiator tRNA. This is Translation initiation factor 2 subunit gamma from Pyrococcus horikoshii (strain ATCC 700860 / DSM 12428 / JCM 9974 / NBRC 100139 / OT-3).